The following is a 555-amino-acid chain: Glucose-6-phosphate isomerase (555 aa).

Residue Glu356 is the Proton donor of the active site. Residues His387 and Lys515 contribute to the active site.

The protein belongs to the GPI family.

It is found in the cytoplasm. It carries out the reaction alpha-D-glucose 6-phosphate = beta-D-fructose 6-phosphate. It functions in the pathway carbohydrate biosynthesis; gluconeogenesis. It participates in carbohydrate degradation; glycolysis; D-glyceraldehyde 3-phosphate and glycerone phosphate from D-glucose: step 2/4. Functionally, catalyzes the reversible isomerization of glucose-6-phosphate to fructose-6-phosphate. This Desulforapulum autotrophicum (strain ATCC 43914 / DSM 3382 / VKM B-1955 / HRM2) (Desulfobacterium autotrophicum) protein is Glucose-6-phosphate isomerase.